We begin with the raw amino-acid sequence, 51 residues long: Large ribosomal subunit protein eL39 (51 aa).

The protein belongs to the eukaryotic ribosomal protein eL39 family.

This Pyrobaculum islandicum (strain DSM 4184 / JCM 9189 / GEO3) protein is Large ribosomal subunit protein eL39.